We begin with the raw amino-acid sequence, 485 residues long: uncharacterized protein (485 aa).

The protein resides in the virion. This is an uncharacterized protein from Acanthamoeba polyphaga mimivirus (APMV).